Reading from the N-terminus, the 392-residue chain is Chaperone protein DnaJ 2 (392 aa).

Positions Asp-10 to Arg-75 constitute a J domain. The segment at Gly-161–Thr-239 adopts a CR-type zinc-finger fold. Cys-174, Cys-177, Cys-191, Cys-194, Cys-213, Cys-216, Cys-227, and Cys-230 together coordinate Zn(2+). CXXCXGXG motif repeat units follow at residues Cys-174–Gly-181, Cys-191–Gly-198, Cys-213–Gly-220, and Cys-227–Gly-234.

It belongs to the DnaJ family. In terms of assembly, homodimer. Requires Zn(2+) as cofactor.

It is found in the cytoplasm. In terms of biological role, participates actively in the response to hyperosmotic and heat shock by preventing the aggregation of stress-denatured proteins and by disaggregating proteins, also in an autonomous, DnaK-independent fashion. Unfolded proteins bind initially to DnaJ; upon interaction with the DnaJ-bound protein, DnaK hydrolyzes its bound ATP, resulting in the formation of a stable complex. GrpE releases ADP from DnaK; ATP binding to DnaK triggers the release of the substrate protein, thus completing the reaction cycle. Several rounds of ATP-dependent interactions between DnaJ, DnaK and GrpE are required for fully efficient folding. Also involved, together with DnaK and GrpE, in the DNA replication of plasmids through activation of initiation proteins. The polypeptide is Chaperone protein DnaJ 2 (Mycolicibacterium paratuberculosis (strain ATCC BAA-968 / K-10) (Mycobacterium paratuberculosis)).